The sequence spans 214 residues: ATP synthase subunit a (214 aa).

The next 6 helical transmembrane spans lie at 9–29, 64–84, 88–108, 121–141, 150–170, and 182–202; these read LDGMTSLWSWLTPMFLSVFMI, IMMVLIIFNNLLGMAPFTYGI, LWVNMTLALLLWGLILLSGYI, SGAPLLLLPFLILIESISIMI, LVANMSAGHIILALMASVLSS, and LIMVGYYLFEFFVCFIQAYIF.

This sequence belongs to the ATPase A chain family. F-type ATPases have 2 components, CF(1) - the catalytic core - and CF(0) - the membrane proton channel. CF(1) has five subunits: alpha(3), beta(3), gamma(1), delta(1), epsilon(1). CF(0) has three main subunits: a, b and c.

Its subcellular location is the mitochondrion inner membrane. Functionally, mitochondrial membrane ATP synthase (F(1)F(0) ATP synthase or Complex V) produces ATP from ADP in the presence of a proton gradient across the membrane which is generated by electron transport complexes of the respiratory chain. F-type ATPases consist of two structural domains, F(1) - containing the extramembraneous catalytic core and F(0) - containing the membrane proton channel, linked together by a central stalk and a peripheral stalk. During catalysis, ATP synthesis in the catalytic domain of F(1) is coupled via a rotary mechanism of the central stalk subunits to proton translocation. Key component of the proton channel; it may play a direct role in the translocation of protons across the membrane. The protein is ATP synthase subunit a (ATP6) of Albinaria caerulea (Land snail).